The following is a 1549-amino-acid chain: Structural maintenance of chromosomes protein 4 (1549 aa).

Residues 1–78 form a disordered region; that stretch reads MPPKTSAAPP…LFSLQLPSRP (78 aa). Residues 26 to 36 show a composition bias toward basic residues; that stretch reads KPQKKTTKPVN. The segment covering 37 to 59 has biased composition (basic and acidic residues); sequence RHKEGSKDPEEELQRAVNEKFDG. 121 to 128 is a binding site for ATP; that stretch reads GPNGSGKS. A coiled-coil region spans residues 326–604; sequence MKLEQRRRQR…QNSSCSSSNK (279 aa). 2 stretches are compositionally biased toward basic and acidic residues: residues 396–407 and 420–444; these read LSDLGTEETRRK and AEAE…AERK. 2 disordered regions span residues 396 to 444 and 460 to 485; these read LSDL…AERK and KTAN…EEQK. Residues 619-734 form the SMC hinge domain; sequence KSFHGRLGDL…GDSTQEAQRM (116 aa). 2 coiled-coil regions span residues 786-1058 and 1144-1182; these read KAAE…KVNR and EKIN…SIKA. Positions 1440-1459 are enriched in polar residues; it reads IQTTRDVTSRPQSKATTSGD. Residues 1440–1549 are disordered; sequence IQTTRDVTSR…AIVDDDDDME (110 aa). Over residues 1460 to 1474 the composition is skewed to basic and acidic residues; it reads GTERPASRSASRPES. A compositionally biased stretch (polar residues) spans 1510-1523; the sequence is TPPSKRSNSASTPK.

The protein belongs to the SMC family. SMC4 subfamily. In terms of assembly, component of the condensin I complex, which contains the mix-1/SMC2 and smc-4/SMC4 heterodimer, and three non SMC subunits that probably regulate the complex: dpy-26, capg-1 and dpy-28. Within the complex, interacts with mix-1, dpy-26, capg-1 and dpy-28. Component of the condensin II complex, which contains the mix-1/SMC2 and smc-4/SMC4 heterodimer, and three non SMC subunits, kle-2, capg-2 and hcp-6 that probably regulate the complex. Within the complex, interacts with mix-1, kle-2, capg-2 and hcp-6. Interacts with smcl-1.

The protein resides in the nucleus. The protein localises to the chromosome. Functionally, central component of the condensin I complex, a complex required for conversion of interphase chromatin into mitotic-like condense chromosomes. The condensin I complex introduces positive supercoils into relaxed DNA in the presence of type I topoisomerases. Converts nicked DNA into positive knotted forms in the presence of type II topoisomerases. Also a central component of the condensin II complex, a complex that seems to play a role in prophase chromosome condensation. Both the condensin complex I and II play a role in meiotic and mitotic chromosome segregation. Plays a role in robust cytokinesis upon the presence of chromatin obstructions. In Caenorhabditis elegans, this protein is Structural maintenance of chromosomes protein 4 (smc-4).